Reading from the N-terminus, the 250-residue chain is MSSALPIATNLYYDNHFQRPGVKLLPNEFYTTSEDMVLVTVLGSCVAACIQDRTAGIGGMNHFMLPDDGADVGQAASDSMRYGAYAMEVLINELIKAGGRRERFEAKVFGGGAVLAGMTTMNIGDRNSEFVRRYLALEKIRIVAEDLQGSHPRKVAFMPRTGQVMVKKLRLQQEAGVAEREQALMRQNAQARAERLAAARKRVELFSSPAASKARVELFSTPAAARPKVELFGAGSRPINSNNARTTEEA.

Belongs to the CheD family.

The enzyme catalyses L-glutaminyl-[protein] + H2O = L-glutamyl-[protein] + NH4(+). In terms of biological role, probably deamidates glutamine residues to glutamate on methyl-accepting chemotaxis receptors (MCPs), playing an important role in chemotaxis. This Paraburkholderia xenovorans (strain LB400) protein is Probable chemoreceptor glutamine deamidase CheD.